The primary structure comprises 339 residues: Ectoine/5-hydroxyectoine-binding periplasmic protein UehA (339 aa).

Positions 1–20 (MAQSITFTFGAVAAAGIALA) are cleaved as a signal peptide. L-ectoine is bound by residues Glu36, Arg171, Asn211, Phe215, and Phe236. An intrachain disulfide couples Cys162 to Cys303.

The protein belongs to the bacterial solute-binding protein 7 family. As to quaternary structure, monomer. The complex comprises the extracytoplasmic solute receptor protein UehA, and the two transmembrane proteins UehB and UehC.

The protein resides in the periplasm. Part of the tripartite ATP-independent periplasmic (TRAP) transport system UehABC, which imports both ectoine and 5-hydroxyectoine as nutrients, and not as osmoprotectants. UehA binds both ectoine and 5-hydroxyectoine with high specificity and affinity. The polypeptide is Ectoine/5-hydroxyectoine-binding periplasmic protein UehA (Ruegeria pomeroyi (strain ATCC 700808 / DSM 15171 / DSS-3) (Silicibacter pomeroyi)).